Here is a 374-residue protein sequence, read N- to C-terminus: Autophagy-related protein 18e (374 aa).

4 WD repeats span residues 28 to 66 (KSDL…KKSI), 72 to 117 (ESGF…CLSE), 202 to 242 (AHDS…LLQE), and 247 to 286 (VERA…LSFD).

The protein belongs to the WD repeat PROPPIN family. Component of the PI(3,5)P2 regulatory complex at least composed of ATG18, SAC/FIG4, FAB1 and VAC14.

Its subcellular location is the preautophagosomal structure membrane. It localises to the vacuole membrane. In terms of biological role, the PI(3,5)P2 regulatory complex regulates both the synthesis and turnover of phosphatidylinositol 3,5-bisphosphate (PtdIns(3,5)P2). Required for autophagy. The polypeptide is Autophagy-related protein 18e (ATG18E) (Arabidopsis thaliana (Mouse-ear cress)).